The chain runs to 2907 residues: Fibrillin-2 (2907 aa).

A signal peptide spans 1–28; it reads MGRRRRLCLQPYFVWLGCVALWAQGTDG. Residues 26-58 form a disordered region; sequence TDGQPQPPPPKTLRPQPPPQQVRPAVAGSEGGF. Residues 29–77 constitute a propeptide that is removed on maturation; it reads QPQPPPPKTLRPQPPPQQVRPAVAGSEGGFMGPEYRDEGAVAASRVRRR. The span at 30 to 46 shows a compositional bias: pro residues; sequence PQPPPPKTLRPQPPPQQ. EGF-like domains follow at residues 111 to 142, 145 to 176, and 176 to 208; these read IVPICRNSCGDGFCSRPNMCTCSSGQISPTCG, SIQQCSVRCMNGGTCADDHCQCQKGYIGTYCG, and GQPVCENGCQNGGRCIGPNRCACVYGFTGPQCE. Intrachain disulfides connect Cys-115–Cys-124, Cys-119–Cys-130, Cys-132–Cys-141, Cys-149–Cys-159, Cys-153–Cys-164, Cys-166–Cys-175, Cys-180–Cys-190, Cys-184–Cys-196, and Cys-198–Cys-207. The segment at 149 to 359 is interaction with MFAP4; it reads CSVRCMNGGT…VTSTDGSRCI (211 aa). In terms of domain architecture, TB 1 spans 214 to 266; sequence GPCFTQVNNQMCQGQLTGIVCTKTLCCATIGRAWGHPCEMCPAQPQPCRRGFI. The EGF-like 4; calcium-binding domain occupies 276 to 317; the sequence is DVDECQAIPGLCQGGNCINTVGSFECRCPAGHKQSETTQKCE. 6 disulfide bridges follow: Cys-280-Cys-292, Cys-287-Cys-301, Cys-303-Cys-316, Cys-322-Cys-334, Cys-329-Cys-343, and Cys-345-Cys-358. Ser-298 is a glycosylation site (O-linked (Glc) serine). The EGF-like 5; calcium-binding domain maps to 318-359; sequence DIDECSVIPGVCETGDCSNTVGSYFCLCPRGFVTSTDGSRCI. O-linked (Glc) serine glycosylation is present at Ser-340. Positions 364–417 constitute a TB 2 domain; that stretch reads GTCFSGLVNGRCAQELPGRMAKAQCCCEPGRCWSIGTIPEACPVRGSEEYRRLC. N-linked (GlcNAc...) asparagine glycosylation is present at Asn-485. Positions 487-527 constitute an EGF-like 6 domain; the sequence is TIDICKHHANLCLNGRCIPTVSSYRCECNMGYKQDANGDCI. Intrachain disulfides connect Cys-491–Cys-503, Cys-498–Cys-512, Cys-514–Cys-526, Cys-532–Cys-542, Cys-537–Cys-551, Cys-553–Cys-566, Cys-572–Cys-584, Cys-579–Cys-593, Cys-595–Cys-608, Cys-614–Cys-625, Cys-620–Cys-634, Cys-636–Cys-649, Cys-655–Cys-666, Cys-661–Cys-675, and Cys-677–Cys-690. Ser-509 carries an O-linked (Glc) serine glycan. The region spanning 528–567 is the EGF-like 7; calcium-binding domain; that stretch reads DVDECTSNPCSNGDCVNTPGSYYCKCHAGFQRTPTKQACI. O-linked (Glc) serine glycosylation occurs at Ser-548. The EGF-like 8; calcium-binding domain maps to 568-609; sequence DIDECIQNGVLCKNGRCVNTDGSFQCICNAGFELTTDGKNCV. Ser-590 carries O-linked (Glc) serine glycosylation. Positions 610 to 650 constitute an EGF-like 9; calcium-binding domain; sequence DHDECTTTNMCLNGMCINEDGSFKCVCKPGFILAPNGRYCT. Ser-631 is a glycosylation site (O-linked (Glc) serine). In terms of domain architecture, EGF-like 10; calcium-binding spans 651–691; sequence DVDECQTPGICMNGHCINNEGSFRCDCPPGLAVGVDGRVCV. A glycan (O-linked (Glc) serine) is linked at Ser-672. Positions 697–749 constitute a TB 3 domain; the sequence is STCYGEIKKGVCVRPFPGAVTKSECCCANPDYGFGEPCQPCPAKNSAEFHGLC. The region spanning 761-802 is the EGF-like 11; calcium-binding domain; sequence DINECALDPDICANGICENLRGSYRCNCNSGYEPDASGRNCI. 9 cysteine pairs are disulfide-bonded: Cys-765–Cys-777, Cys-772–Cys-786, Cys-788–Cys-801, Cys-807–Cys-819, Cys-814–Cys-828, Cys-830–Cys-843, Cys-849–Cys-859, Cys-854–Cys-868, and Cys-870–Cys-883. Residues 803 to 844 enclose the EGF-like 12; calcium-binding domain; that stretch reads DIDECLVNRLLCDNGLCRNTPGSYSCTCPPGYVFRTETETCE. Residue Ser-825 is glycosylated (O-linked (Glc) serine). The region spanning 845-883 is the EGF-like 13; calcium-binding domain; it reads DVNECESNPCVNGACRNNLGSFHCECSPGSKLSSTGLIC. O-linked (Glc) serine glycosylation is present at Ser-865. One can recognise a TB 4 domain in the interval 889–940; it reads GTCWLNIQDNRCEVNINGATLKSECCATLGAAWGSPCERCELDAACPRGFAR. Positions 948 to 989 constitute an EGF-like 14; calcium-binding domain; the sequence is DVNECEVFPGVCPNGRCVNSKGSFHCECPEGLTLDGTGRVCL. 3 disulfides stabilise this stretch: Cys-952-Cys-964, Cys-959-Cys-973, and Cys-975-Cys-988. Ser-970 carries an O-linked (Glc) serine glycan. In terms of domain architecture, TB 5 spans 994-1045; the sequence is EHCFLKWDEDECIHPVPGKFRMDACCCAVGAAWGTECEECPKPGTKEYETLC. Positions 1066–1107 constitute an EGF-like 15; calcium-binding domain; that stretch reads DINECKAFPGMCTYGKCRNTIGSFKCRCNNGFALDMEERNCT. Disulfide bonds link Cys-1070–Cys-1082, Cys-1077–Cys-1091, Cys-1093–Cys-1106, Cys-1112–Cys-1124, Cys-1119–Cys-1133, Cys-1135–Cys-1149, Cys-1155–Cys-1167, Cys-1162–Cys-1176, Cys-1178–Cys-1191, Cys-1197–Cys-1209, Cys-1204–Cys-1218, Cys-1220–Cys-1233, Cys-1239–Cys-1250, Cys-1246–Cys-1259, Cys-1261–Cys-1274, Cys-1280–Cys-1292, Cys-1287–Cys-1301, Cys-1303–Cys-1316, Cys-1322–Cys-1334, Cys-1329–Cys-1343, Cys-1345–Cys-1358, Cys-1364–Cys-1377, Cys-1371–Cys-1386, Cys-1388–Cys-1399, Cys-1405–Cys-1418, Cys-1412–Cys-1427, Cys-1429–Cys-1440, Cys-1446–Cys-1458, Cys-1453–Cys-1467, Cys-1469–Cys-1482, Cys-1488–Cys-1499, Cys-1494–Cys-1508, Cys-1510–Cys-1523, Cys-1529–Cys-1540, Cys-1535–Cys-1549, and Cys-1551–Cys-1564. O-linked (Glc) serine glycosylation is present at Ser-1088. A glycan (N-linked (GlcNAc...) asparagine) is linked at Asn-1105. One can recognise an EGF-like 16; calcium-binding domain in the interval 1108–1150; it reads DIDECRISPDLCGSGICVNTPGSFECECFEGYESGFMMMKNCM. The EGF-like 17; calcium-binding domain occupies 1151–1192; that stretch reads DIDECERNPLLCRGGTCVNTEGSFQCDCPLGHELSPSREDCV. O-linked (Glc) serine glycosylation occurs at Ser-1173. An EGF-like 18; calcium-binding domain is found at 1193 to 1234; it reads DINECSLSDNLCRNGKCVNMIGTYQCSCNPGYQATPDRQGCT. An O-linked (Glc) threonine glycan is attached at Thr-1215. Positions 1235-1275 constitute an EGF-like 19; calcium-binding domain; it reads DIDECMIMNGGCDTQCTNSEGSYECSCSEGYALMPDGRSCA. Residue Ser-1256 is glycosylated (O-linked (Glc) serine). The 42-residue stretch at 1276–1317 folds into the EGF-like 20; calcium-binding domain; that stretch reads DIDECENNPDICDGGQCTNIPGEYRCLCYDGFMASMDMKTCI. The EGF-like 21; calcium-binding domain maps to 1318 to 1359; the sequence is DVNECDLNPNICMFGECENTKGSFICHCQLGYSVKKGTTGCT. Ser-1340 is a glycosylation site (O-linked (Glc) serine). The region spanning 1360–1400 is the EGF-like 22; calcium-binding domain; that stretch reads DVDECEIGAHNCDMHASCLNVPGSFKCSCREGWVGNGIKCI. Residue Ser-1383 is glycosylated (O-linked (Glc) serine). The EGF-like 23; calcium-binding domain occupies 1401 to 1441; sequence DLDECANGTHQCSINAQCVNTPGSYRCACSEGFTGDGFTCS. An N-linked (GlcNAc...) asparagine glycan is attached at Asn-1407. The region spanning 1442-1483 is the EGF-like 24; calcium-binding domain; that stretch reads DVDECAENTNLCENGQCLNVPGAYRCECEMGFTPASDSRSCQ. The region spanning 1484 to 1524 is the EGF-like 25; calcium-binding domain; sequence DIDECSFQNICVFGTCNNLPGMFHCICDDGYELDRTGGNCT. The N-linked (GlcNAc...) asparagine glycan is linked to Asn-1522. In terms of domain architecture, EGF-like 26; calcium-binding spans 1525 to 1565; that stretch reads DIDECADPINCVNGLCVNTPGRYECNCPPDFQLNPTGVGCV. The 57-residue stretch at 1570 to 1626 folds into the TB 6 domain; that stretch reads GNCYLKFGPRGDGSLSCNTEVGVGVSRSSCCCSLGKAWGNPCETCPPVNSTEYYTLC. N-linked (GlcNAc...) asparagine glycosylation occurs at Asn-1618. The region spanning 1643 to 1684 is the EGF-like 27; calcium-binding domain; sequence DIDECQELPGLCQGGNCINTFGSFQCECPQGYYLSEETRICE. 6 cysteine pairs are disulfide-bonded: Cys-1647–Cys-1659, Cys-1654–Cys-1668, Cys-1670–Cys-1683, Cys-1689–Cys-1701, Cys-1696–Cys-1710, and Cys-1712–Cys-1725. O-linked (Glc) serine glycosylation is present at Ser-1665. Residues 1685 to 1726 enclose the EGF-like 28; calcium-binding domain; that stretch reads DIDECFAHPGVCGPGTCYNTLGNYTCICPPEYMQVNGGHNCM. Asn-1707 carries N-linked (GlcNAc...) asparagine glycosylation. The tract at residues 1728–2164 is interaction with MFAP4; that stretch reads MRKSFCYRSY…VPSLHDTRED (437 aa). The 54-residue stretch at 1731 to 1784 folds into the TB 7 domain; the sequence is SFCYRSYNGTTCENELPFNVTKRMCCCTYNVGKAWNKPCEPCPTPGTADFKTIC. 2 N-linked (GlcNAc...) asparagine glycosylation sites follow: Asn-1738 and Asn-1749. The region spanning 1801-1842 is the EGF-like 29; calcium-binding domain; that stretch reads DIDECKEIPGICANGVCINQIGSFRCECPTGFSYNDLLLVCE. Disulfide bonds link Cys-1805-Cys-1817, Cys-1812-Cys-1826, Cys-1828-Cys-1841, Cys-1847-Cys-1860, Cys-1854-Cys-1869, Cys-1871-Cys-1883, Cys-1889-Cys-1901, Cys-1896-Cys-1910, Cys-1912-Cys-1925, Cys-1931-Cys-1941, Cys-1936-Cys-1950, Cys-1952-Cys-1964, Cys-1970-Cys-1983, Cys-1978-Cys-1992, Cys-1994-Cys-2007, Cys-2013-Cys-2025, Cys-2020-Cys-2034, Cys-2036-Cys-2047, Cys-2053-Cys-2065, Cys-2060-Cys-2074, and Cys-2076-Cys-2089. Positions 1843–1884 constitute an EGF-like 30; calcium-binding domain; the sequence is DIDECSNGDNLCQRNADCINSPGSYRCECAAGFKLSPNGACV. The O-linked (Glc) serine glycan is linked to Ser-1866. The EGF-like 31; calcium-binding domain maps to 1885–1926; it reads DRNECLEIPNVCSHGLCVDLQGSYQCICNNGFKASQDQTMCM. Positions 1927 to 1965 constitute an EGF-like 32; calcium-binding domain; sequence DVDECERHPCGNGTCKNTVGSYNCLCYPGFELTHNNDCL. Residue Asn-1938 is glycosylated (N-linked (GlcNAc...) asparagine). Residue Ser-1947 is glycosylated (O-linked (Glc) serine). The EGF-like 33; calcium-binding domain maps to 1966–2008; sequence DIDECSSFFGQVCRNGRCFNEIGSFKCLCNEGYELTPDGKNCI. O-linked (Glc) serine glycosylation is present at Ser-1989. An EGF-like 34; calcium-binding domain is found at 2009 to 2048; sequence DTNECVALPGSCSPGTCQNLEGSFRCICPPGYEVRSENCI. The EGF-like 35; calcium-binding domain maps to 2049–2090; the sequence is DINECDEDPNICLFGSCTNTPGGFQCICPPGFVLSDNGRRCF. One can recognise a TB 8 domain in the interval 2095–2148; sequence SFCFTNFENGKCSVPKAFNTTKAKCCCSKMPGEGWGDPCELCPKDDEVAFQDLC. A glycan (N-linked (GlcNAc...) asparagine) is linked at Asn-2113. One can recognise an EGF-like 36; calcium-binding domain in the interval 2164–2205; it reads DVNECLESPGICSNGQCINTDGSFRCECPMGYNLDYTGVRCV. 15 disulfide bridges follow: Cys-2168–Cys-2180, Cys-2175–Cys-2189, Cys-2191–Cys-2204, Cys-2210–Cys-2221, Cys-2216–Cys-2230, Cys-2232–Cys-2244, Cys-2250–Cys-2261, Cys-2257–Cys-2270, Cys-2272–Cys-2285, Cys-2291–Cys-2305, Cys-2298–Cys-2314, Cys-2316–Cys-2329, Cys-2335–Cys-2347, Cys-2342–Cys-2356, and Cys-2358–Cys-2371. Ser-2186 is a glycosylation site (O-linked (Glc) serine). Residues 2206-2245 enclose the EGF-like 37; calcium-binding domain; that stretch reads DTDECSIGNPCGNGTCTNVIGSFECTCNEGFEPGPMMNCE. An N-linked (GlcNAc...) asparagine glycan is attached at Asn-2218. Residues 2246-2286 enclose the EGF-like 38; calcium-binding domain; the sequence is DINECAQNPLLCAFRCMNTFGSYECTCPVGYALREDQKMCK. Residue Ser-2267 is glycosylated (O-linked (Glc) serine). In terms of domain architecture, EGF-like 39; calcium-binding spans 2287–2330; the sequence is DLDECAEGLHDCESRGMMCKNLIGTFMCICPPGMARRPDGEGCV. Residues 2331-2372 form the EGF-like 40; calcium-binding domain; sequence DENECRTKPGICENGRCVNIIGSYRCECNEGFQSSSSGTECL. Ser-2353 is a glycosylation site (O-linked (Glc) serine). Residues 2377-2430 form the TB 9 domain; that stretch reads GLCFAEVLQTMCQMASSSRNLVTKSECCCDGGRGWGHQCELCPLPGTAQYKKIC. Residues 2442-2483 form the EGF-like 41; calcium-binding domain; sequence DIDECKVMPSLCTNGQCVNTMGSFRCFCKVGYTTDISGTACV. Disulfide bonds link Cys-2446/Cys-2458, Cys-2453/Cys-2467, Cys-2469/Cys-2482, Cys-2488/Cys-2499, Cys-2495/Cys-2508, Cys-2510/Cys-2523, Cys-2529/Cys-2540, Cys-2536/Cys-2549, Cys-2551/Cys-2562, Cys-2568/Cys-2581, Cys-2575/Cys-2590, Cys-2592/Cys-2605, Cys-2611/Cys-2621, Cys-2617/Cys-2630, Cys-2632/Cys-2645, Cys-2651/Cys-2662, Cys-2657/Cys-2671, Cys-2673/Cys-2686, Cys-2692/Cys-2703, Cys-2699/Cys-2712, and Cys-2714/Cys-2726. A glycan (O-linked (Glc) serine) is linked at Ser-2464. Positions 2484–2524 constitute an EGF-like 42; calcium-binding domain; the sequence is DLDECSQSPKPCNFICKNTKGSYQCSCPRGYVLQEDGKTCK. O-linked (Glc) serine glycosylation is present at Ser-2505. The region spanning 2525-2563 is the EGF-like 43; calcium-binding domain; it reads DLDECQTKQHNCQFLCVNTLGGFTCKCPPGFTQHHTACI. The region spanning 2564–2606 is the EGF-like 44; calcium-binding domain; the sequence is DNNECGSQPSLCGAKGICQNTPGSFSCECQRGFSLDASGLNCE. O-linked (Glc) serine glycosylation occurs at Ser-2587. An EGF-like 45; calcium-binding domain is found at 2607 to 2646; that stretch reads DVDECDGNHRCQHGCQNILGGYRCGCPQGYVQHYQWNQCV. Positions 2647 to 2687 constitute an EGF-like 46; calcium-binding domain; the sequence is DENECSNPGACGSASCYNTLGSYKCACPSGFSFDQFSSACH. Ser-2668 carries O-linked (Glc) serine glycosylation. The region spanning 2688–2727 is the EGF-like 47; calcium-binding domain; the sequence is DVNECSSSKNPCSYGCSNTEGGYLCGCPPGYFRVGQGHCV. An N-linked (GlcNAc...) asparagine glycan is attached at Asn-2803.

It belongs to the fibrillin family. As to quaternary structure, interacts with BMP2, BMP4, BMP7, BMP10 and GDF5. Interacts with MFAP2 and MFAP5. Interacts with ADAMTSL5. Interacts with MFAP4. N-glycosylated. In terms of processing, O-glycosylated on serine residues by POGLUT2 and POGLUT3. As to expression, widely expressed.

Its subcellular location is the secreted. The protein resides in the extracellular space. It localises to the extracellular matrix. In terms of biological role, fibrillins are structural components of 10-12 nm extracellular calcium-binding microfibrils, which occur either in association with elastin or in elastin-free bundles. Fibrillin-2-containing microfibrils regulate the early process of elastic fiber assembly. Regulates osteoblast maturation by controlling TGF-beta bioavailability and calibrating TGF-beta and BMP levels, respectively. Hormone secreted by trophoblasts that promotes trophoblast invasiveness. Has glucogenic activity: is able to increase plasma glucose levels. The protein is Fibrillin-2 of Mus musculus (Mouse).